Reading from the N-terminus, the 418-residue chain is Sialidase-3 (418 aa).

An FRIP motif motif is present at residues 24 to 27 (YRIP). Residues arginine 25 and arginine 45 each contribute to the substrate site. The active-site Proton acceptor is aspartate 50. A BNR 1 repeat occupies 129–140 (LCSEDAGCSWGE). 2 residues coordinate substrate: tyrosine 179 and tyrosine 181. The BNR 2 repeat unit spans residues 203–214 (SDDFGVTWHHGK). Residues glutamate 223 and arginine 243 each coordinate substrate. A BNR 3 repeat occupies 254-265 (STDSGGCFQKPT). A Phosphoserine modification is found at serine 312. Arginine 339 serves as a coordination point for substrate. The active-site Nucleophile is tyrosine 369. The active site involves glutamate 386.

It belongs to the glycosyl hydrolase 33 family. Interacts with CAV1; this interaction enhances NEU3 sialidase activity within caveola. Interacts with EGFR; this interaction mediates desialylation of EGFR and enhances downstream signaling. Palmitoylated; may regulate intracellular trafficking and anchorage to plasma membrane and endomembranes. As to expression, expressed in heart, brain and cerebral cortex.

It is found in the cell membrane. Its subcellular location is the membrane. The protein localises to the caveola. It localises to the early endosome membrane. The protein resides in the recycling endosome membrane. It is found in the lysosome membrane. It carries out the reaction Hydrolysis of alpha-(2-&gt;3)-, alpha-(2-&gt;6)-, alpha-(2-&gt;8)- glycosidic linkages of terminal sialic acid residues in oligosaccharides, glycoproteins, glycolipids, colominic acid and synthetic substrates.. It catalyses the reaction a ganglioside GD1a + H2O = a ganglioside GM1 + N-acetylneuraminate. The enzyme catalyses a ganglioside GD1a (d18:1(4E)) + H2O = a ganglioside GM1 (d18:1(4E)) + N-acetylneuraminate. The catalysed reaction is a ganglioside GD1b + H2O = a ganglioside GM1 + N-acetylneuraminate. It carries out the reaction a ganglioside GD1b (d18:1(4E)) + H2O = a ganglioside GM1 (d18:1(4E)) + N-acetylneuraminate. It catalyses the reaction a ganglioside GD3 + H2O = a ganglioside GM3 + N-acetylneuraminate. The enzyme catalyses a ganglioside GD3 (d18:1(4E)) + H2O = a ganglioside GM3 (d18:1(4E)) + N-acetylneuraminate. The catalysed reaction is a ganglioside GM3 + H2O = a beta-D-galactosyl-(1-&gt;4)-beta-D-glucosyl-(1&lt;-&gt;1)-ceramide + N-acetylneuraminate. It carries out the reaction a ganglioside GM1 + H2O = a ganglioside GA1 + N-acetylneuraminate. It catalyses the reaction a ganglioside GM1 (d18:1(4E)) + H2O = a ganglioside GA1 (d18:1(4E)) + N-acetylneuraminate. The enzyme catalyses a ganglioside GM2 (d18:1(4E)) + H2O = a ganglioside GA2 (d18:1(4E)) + N-acetylneuraminate. The catalysed reaction is a ganglioside GM3 (d18:1(4E)) + H2O = a beta-D-Gal-(1-&gt;4)-beta-D-Glc-(1&lt;-&gt;1)-Cer(d18:1(4E)) + N-acetylneuraminate. It carries out the reaction a ganglioside GT1b + H2O = a ganglioside GD1b + N-acetylneuraminate. Its function is as follows. Exo-alpha-sialidase that catalyzes the hydrolytic cleavage of the terminal sialic acid (N-acetylneuraminic acid, Neu5Ac) of a glycan moiety in the catabolism of glycolipids, glycoproteins and oligosacharides. Displays high catalytic efficiency for gangliosides including alpha-(2-&gt;3)-sialylated GD1a and GM3 and alpha-(2-&gt;8)-sialylated GD3. Plays a role in the regulation of transmembrane signaling through the modulation of ganglioside content of the lipid bilayer and by direct interaction with signaling receptors, such as EGFR. Desialylates EGFR and activates downstream signaling in proliferating cells. Contributes to clathrin-mediated endocytosis by regulating sorting of endocytosed receptors to early and recycling endosomes. The sequence is that of Sialidase-3 (Neu3) from Mus musculus (Mouse).